We begin with the raw amino-acid sequence, 431 residues long: Asparagine--tRNA ligase (431 aa).

It belongs to the class-II aminoacyl-tRNA synthetase family.

Its subcellular location is the cytoplasm. It carries out the reaction tRNA(Asn) + L-asparagine + ATP = L-asparaginyl-tRNA(Asn) + AMP + diphosphate + H(+). In Thermococcus kodakarensis (strain ATCC BAA-918 / JCM 12380 / KOD1) (Pyrococcus kodakaraensis (strain KOD1)), this protein is Asparagine--tRNA ligase.